A 176-amino-acid chain; its full sequence is Translation initiation factor IF-3 (176 aa).

Belongs to the IF-3 family. Monomer.

The protein resides in the cytoplasm. In terms of biological role, IF-3 binds to the 30S ribosomal subunit and shifts the equilibrium between 70S ribosomes and their 50S and 30S subunits in favor of the free subunits, thus enhancing the availability of 30S subunits on which protein synthesis initiation begins. The sequence is that of Translation initiation factor IF-3 from Streptococcus equi subsp. zooepidemicus (strain H70).